A 370-amino-acid polypeptide reads, in one-letter code: (5-formylfuran-3-yl)methyl phosphate transaminase (370 aa).

Position 222 is an N6-(pyridoxal phosphate)lysine (Lys-222).

This sequence belongs to the class-I pyridoxal-phosphate-dependent aminotransferase family. In terms of assembly, homodimer. Requires pyridoxal 5'-phosphate as cofactor.

It is found in the cytoplasm. It catalyses the reaction 4-(hydroxymethyl)-2-furancarboxaldehyde phosphate + L-alanine = [5-(aminomethyl)-3-furyl]methyl phosphate + pyruvate. It participates in cofactor biosynthesis; methanofuran biosynthesis. Its function is as follows. Catalyzes the transamination reaction between 4-(hydroxymethyl)-2-furancarboxaldehyde phosphate (4-HFC-P) and alanine to produce pyruvate and 5-(aminomethyl)-3-furanmethanol phosphate (F1-P), the precursor for the furan moiety in methanofuran. This is (5-formylfuran-3-yl)methyl phosphate transaminase from Methanocaldococcus jannaschii (strain ATCC 43067 / DSM 2661 / JAL-1 / JCM 10045 / NBRC 100440) (Methanococcus jannaschii).